Here is a 242-residue protein sequence, read N- to C-terminus: Cell division protein FtsQ (242 aa).

The Cytoplasmic segment spans residues 1-12; the sequence is MWDNAEAMERLT. Residues 13 to 32 form a helical membrane-spanning segment; the sequence is RWLLVMMAMLLAASGLVWFY. Over 33-242 the chain is Periplasmic; sequence NSNHLPVKQV…DGLPEKESEE (210 aa). The 70-residue stretch at 37 to 106 folds into the POTRA domain; the sequence is LPVKQVSLKG…DTVEVVLTER (70 aa).

This sequence belongs to the FtsQ/DivIB family. FtsQ subfamily. Part of a complex composed of FtsB, FtsL and FtsQ.

It localises to the cell inner membrane. Functionally, essential cell division protein. May link together the upstream cell division proteins, which are predominantly cytoplasmic, with the downstream cell division proteins, which are predominantly periplasmic. May control correct divisome assembly. This chain is Cell division protein FtsQ, found in Neisseria gonorrhoeae (strain ATCC 700825 / FA 1090).